The sequence spans 108 residues: Nucleoid-associated protein PLES_37951 (108 aa).

2 disordered regions span residues 1-25 and 87-108; these read MMKGGMAGLMKQAQQMQEKMQKMQE and NQEKMSGFTSGMQLPPGFKMPF. A compositionally biased stretch (polar residues) spans 87–98; the sequence is NQEKMSGFTSGM.

Belongs to the YbaB/EbfC family. Homodimer.

Its subcellular location is the cytoplasm. The protein localises to the nucleoid. Its function is as follows. Binds to DNA and alters its conformation. May be involved in regulation of gene expression, nucleoid organization and DNA protection. The chain is Nucleoid-associated protein PLES_37951 from Pseudomonas aeruginosa (strain LESB58).